A 343-amino-acid polypeptide reads, in one-letter code: Ribosomal RNA small subunit methyltransferase C (343 aa).

This sequence belongs to the methyltransferase superfamily. RsmC family. Monomer.

It localises to the cytoplasm. It catalyses the reaction guanosine(1207) in 16S rRNA + S-adenosyl-L-methionine = N(2)-methylguanosine(1207) in 16S rRNA + S-adenosyl-L-homocysteine + H(+). In terms of biological role, specifically methylates the guanine in position 1207 of 16S rRNA in the 30S particle. This chain is Ribosomal RNA small subunit methyltransferase C, found in Escherichia coli O6:K15:H31 (strain 536 / UPEC).